The sequence spans 402 residues: Enoyl-[acyl-carrier-protein] reductase [NADH] (402 aa).

Residues 48 to 53 (GASSGY), 74 to 75 (FE), 111 to 112 (DA), and 140 to 141 (LA) contribute to the NAD(+) site. Residue Y226 participates in substrate binding. Y236 functions as the Proton donor in the catalytic mechanism. NAD(+) is bound by residues K245 and 274 to 276 (VVT).

The protein belongs to the TER reductase family. Monomer.

The enzyme catalyses a 2,3-saturated acyl-[ACP] + NAD(+) = a (2E)-enoyl-[ACP] + NADH + H(+). Its pathway is lipid metabolism; fatty acid biosynthesis. Involved in the final reduction of the elongation cycle of fatty acid synthesis (FAS II). Catalyzes the reduction of a carbon-carbon double bond in an enoyl moiety that is covalently linked to an acyl carrier protein (ACP). The sequence is that of Enoyl-[acyl-carrier-protein] reductase [NADH] from Xanthomonas axonopodis pv. citri (strain 306).